Consider the following 309-residue polypeptide: tRNA dimethylallyltransferase (309 aa).

9-16 (GPTAVGKT) is an ATP binding site. 11–16 (TAVGKT) contributes to the substrate binding site. The interval 34–37 (DSMQ) is interaction with substrate tRNA.

This sequence belongs to the IPP transferase family. In terms of assembly, monomer. Mg(2+) is required as a cofactor.

It catalyses the reaction adenosine(37) in tRNA + dimethylallyl diphosphate = N(6)-dimethylallyladenosine(37) in tRNA + diphosphate. Catalyzes the transfer of a dimethylallyl group onto the adenine at position 37 in tRNAs that read codons beginning with uridine, leading to the formation of N6-(dimethylallyl)adenosine (i(6)A). This chain is tRNA dimethylallyltransferase, found in Clostridium kluyveri (strain NBRC 12016).